Consider the following 112-residue polypeptide: Beta-defensin 126 (112 aa).

A signal peptide spans 1-20 (MKSLLFTLAVFMLLAQLVSG). An in vitro binds to LPS, mediates antimicrobial activity and inhibits LPS-mediated inflammation region spans residues 21-63 (NWYVKKCLNDVGICKKKCKPEELHVKNGRAMCGKQRDCCVPAD). Intrachain disulfides connect cysteine 27–cysteine 58, cysteine 34–cysteine 52, and cysteine 38–cysteine 59.

The protein belongs to the beta-defensin family. Homodimer or homooligomer; disulfide-linked. O-glycosylated; glycans contain alpha(2,3)-linked sialic acids.

It localises to the secreted. Functionally, highly glycosylated atypical beta-defensin involved in several aspects of sperm function. Facilitates sperm transport in the female reproductive tract and contributes to sperm protection against immunodetection; both functions are probably implicating the negative surface charge provided by its O-linked oligosaccharides in the sperm glycocalyx. Involved in binding of sperm to oviductal epithelial cells to form a sperm reservoir until ovulation. Release from the sperm surface during capacitation and ovaluation by an elevation of oviductal fluid pH is unmasking other surface components and allows sperm to penetrate the cumulus matrix and bind to the zona pellucida of the oocyte. In vitro has antimicrobial activity and may inhibit LPS-mediated inflammation. In Hylobates lar (Lar gibbon), this protein is Beta-defensin 126 (DEFB126).